The chain runs to 89 residues: Small ribosomal subunit protein uS15 (89 aa).

It belongs to the universal ribosomal protein uS15 family. As to quaternary structure, part of the 30S ribosomal subunit. Forms a bridge to the 50S subunit in the 70S ribosome, contacting the 23S rRNA.

Functionally, one of the primary rRNA binding proteins, it binds directly to 16S rRNA where it helps nucleate assembly of the platform of the 30S subunit by binding and bridging several RNA helices of the 16S rRNA. In terms of biological role, forms an intersubunit bridge (bridge B4) with the 23S rRNA of the 50S subunit in the ribosome. This chain is Small ribosomal subunit protein uS15, found in Buchnera aphidicola subsp. Schizaphis graminum (strain Sg).